The sequence spans 317 residues: 4-diphosphocytidyl-2-C-methyl-D-erythritol kinase (317 aa).

K11 is a catalytic residue. 99–109 (PVAAGLAGGST) provides a ligand contact to ATP. The active site involves D141.

Belongs to the GHMP kinase family. IspE subfamily.

It catalyses the reaction 4-CDP-2-C-methyl-D-erythritol + ATP = 4-CDP-2-C-methyl-D-erythritol 2-phosphate + ADP + H(+). It functions in the pathway isoprenoid biosynthesis; isopentenyl diphosphate biosynthesis via DXP pathway; isopentenyl diphosphate from 1-deoxy-D-xylulose 5-phosphate: step 3/6. In terms of biological role, catalyzes the phosphorylation of the position 2 hydroxy group of 4-diphosphocytidyl-2C-methyl-D-erythritol. The protein is 4-diphosphocytidyl-2-C-methyl-D-erythritol kinase of Nostoc punctiforme (strain ATCC 29133 / PCC 73102).